A 188-amino-acid chain; its full sequence is Adenine phosphoribosyltransferase (188 aa).

This sequence belongs to the purine/pyrimidine phosphoribosyltransferase family. Homodimer.

It localises to the cytoplasm. It carries out the reaction AMP + diphosphate = 5-phospho-alpha-D-ribose 1-diphosphate + adenine. It functions in the pathway purine metabolism; AMP biosynthesis via salvage pathway; AMP from adenine: step 1/1. Functionally, catalyzes a salvage reaction resulting in the formation of AMP, that is energically less costly than de novo synthesis. This is Adenine phosphoribosyltransferase from Salinispora tropica (strain ATCC BAA-916 / DSM 44818 / JCM 13857 / NBRC 105044 / CNB-440).